The following is a 1037-amino-acid chain: Guanine nucleotide-binding protein G(s) subunit alpha isoforms XLas (1037 aa).

Disordered stretches follow at residues 1–105 (MGVR…MPFE), 185–224 (APGG…EETM), 283–588 (SPSQ…TSGC), and 640–666 (PLAE…KKRS). Residues 33–46 (APGAAAPGAGPSPA) are compositionally biased toward low complexity. The segment covering 343–354 (PDKRERAERPPV) has biased composition (basic and acidic residues). Low complexity-rich tracts occupy residues 361–408 (MEGA…GATP) and 416–521 (APAD…PASG). A compositionally biased stretch (basic and acidic residues) spans 553-565 (GKSESSRGRRVYY). Over residues 572–583 (SDDDSSGDESDD) the composition is skewed to acidic residues. Over residues 640–660 (PLAEKRRQMRKEALEKRAQKR) the composition is skewed to basic and acidic residues. The stretch at 641–667 (LAEKRRQMRKEALEKRAQKRAEKKRSK) forms a coiled coil. A G-alpha domain is found at 682-1037 (CTHRLLLLGA…RMHLRQYELL (356 aa)). A G1 motif region spans residues 685–698 (RLLLLGAGESGKST). Residue 690-698 (GAGESGKST) coordinates GTP. Serine 697 is a binding site for Mg(2+). Positions 711-734 (FNGEGGEEDPQAARSNSDGEKATK) are disordered. Residues 730–756 (EKATKVQDIKNNLKEAIETIVAAMSNL) are a coiled coil. Positions 839–847 (DLLRCRVLT) are G2 motif. Residues 840-847 (LLRCRVLT), 866-870 (DVGGQ), and 935-938 (NKQD) each bind GTP. At arginine 844 the chain carries ADP-ribosylarginine; by cholera toxin. Threonine 847 contacts Mg(2+). A G3 motif region spans residues 862–871 (FHMFDVGGQR). The segment at 931 to 938 (ILFLNKQD) is G4 motif. Residue serine 995 is modified to Phosphoserine. The G5 motif stretch occupies residues 1007–1012 (TCAVDT). Alanine 1009 serves as a coordination point for GTP.

The protein belongs to the G-alpha family. G(s) subfamily. As to quaternary structure, g proteins are composed of 3 units; alpha, beta and gamma. The alpha chain contains the guanine nucleotide binding site. Interacts through its N-terminal region with ALEX which is produced from the same locus in a different open reading frame. This interaction may inhibit its adenylyl cyclase-stimulating activity. Interacts with MAGED2.

The protein localises to the cell membrane. Its subcellular location is the apical cell membrane. The enzyme catalyses GTP + H2O = GDP + phosphate + H(+). Its function is as follows. Guanine nucleotide-binding proteins (G proteins) function as transducers in numerous signaling pathways controlled by G protein-coupled receptors (GPCRs). The alpha chain contains the guanine nucleotide binding site and alternates between an active, GTP-bound state and an inactive, GDP-bound state. Signaling by an activated GPCR promotes GDP release and GTP binding. The alpha subunit has a low GTPase activity that converts bound GTP to GDP, thereby terminating the signal. Both GDP release and GTP hydrolysis are modulated by numerous regulatory proteins. Signaling involves the activation of adenylyl cyclases, resulting in increased levels of the signaling molecule cAMP. GNAS functions downstream of several GPCRs, including beta-adrenergic receptors. XLas isoforms interact with the same set of receptors as Gnas isoforms. This chain is Guanine nucleotide-binding protein G(s) subunit alpha isoforms XLas (GNAS), found in Homo sapiens (Human).